Consider the following 286-residue polypeptide: Putative ribosome-inactivating protein (286 aa).

Residues M1–T21 form the signal peptide. N103 and N110 each carry an N-linked (GlcNAc...) asparagine glycan. Residue E185 is part of the active site. The N-linked (GlcNAc...) asparagine glycan is linked to N252.

It belongs to the ribosome-inactivating protein family. Type 1 RIP subfamily.

The catalysed reaction is Endohydrolysis of the N-glycosidic bond at one specific adenosine on the 28S rRNA.. The polypeptide is Putative ribosome-inactivating protein (Cucumis ficifolius (Cucumis figarei)).